The chain runs to 428 residues: Serine--tRNA ligase (428 aa).

Residue 235–237 (TAE) coordinates L-serine. 266–268 (RSE) serves as a coordination point for ATP. E289 contributes to the L-serine binding site. 353-356 (EISS) is a binding site for ATP. S389 serves as a coordination point for L-serine.

The protein belongs to the class-II aminoacyl-tRNA synthetase family. Type-1 seryl-tRNA synthetase subfamily. In terms of assembly, homodimer. The tRNA molecule binds across the dimer.

It localises to the cytoplasm. It carries out the reaction tRNA(Ser) + L-serine + ATP = L-seryl-tRNA(Ser) + AMP + diphosphate + H(+). It catalyses the reaction tRNA(Sec) + L-serine + ATP = L-seryl-tRNA(Sec) + AMP + diphosphate + H(+). The protein operates within aminoacyl-tRNA biosynthesis; selenocysteinyl-tRNA(Sec) biosynthesis; L-seryl-tRNA(Sec) from L-serine and tRNA(Sec): step 1/1. Its function is as follows. Catalyzes the attachment of serine to tRNA(Ser). Is also able to aminoacylate tRNA(Sec) with serine, to form the misacylated tRNA L-seryl-tRNA(Sec), which will be further converted into selenocysteinyl-tRNA(Sec). The polypeptide is Serine--tRNA ligase (Shewanella piezotolerans (strain WP3 / JCM 13877)).